The sequence spans 470 residues: MAKTLYEKVWDAHLVVEPAGEAPIIYVDRHLVHEVTSPQAFSGLKMAGRPLRAVEKTFATMDHNTSTKSASLTALSPMARTQVETLADNCRDFNVRLYDIHHPNQGIVHVMGPELGITLPGTVIVCGDSHTATHGAFGALAFGIGTSEVEHVLATQTLRQLKAKTMKIEVRGKVADGITAKDIVLAIIGKIGMDGGTGYVVEFCGEAIRDLSMEGRMTLCNMAIEMGAKAGMVAPDETTFAYLEGREFAPKGDAWQQALADWRELHTDADAVFDAEVVLEAAAIAPQLTWGTNPGQVVAIDGVVPNPADETNPVVRTSMEKALAYVDLTPGTPMTDIAINKVFIGSCTNSRIEDLRAAAAQAKGRKVASGVTAIVVPGSGQVKLQAEAEGLDKIFLEAGFEWRLPGCSMCLAMNDDRLEAGDRCASTSNRNFEGRQGRGSRTHLVSPAMAAAAAVAGHFVDIRVHRPLED.

[4Fe-4S] cluster-binding residues include C347, C407, and C410.

It belongs to the aconitase/IPM isomerase family. LeuC type 1 subfamily. As to quaternary structure, heterodimer of LeuC and LeuD. It depends on [4Fe-4S] cluster as a cofactor.

It catalyses the reaction (2R,3S)-3-isopropylmalate = (2S)-2-isopropylmalate. It functions in the pathway amino-acid biosynthesis; L-leucine biosynthesis; L-leucine from 3-methyl-2-oxobutanoate: step 2/4. In terms of biological role, catalyzes the isomerization between 2-isopropylmalate and 3-isopropylmalate, via the formation of 2-isopropylmaleate. The sequence is that of 3-isopropylmalate dehydratase large subunit from Shewanella amazonensis (strain ATCC BAA-1098 / SB2B).